Here is a 774-residue protein sequence, read N- to C-terminus: E3 ubiquitin-protein ligase RFWD3 (774 aa).

2 disordered regions span residues 32–126 (GTIE…TAGA) and 203–281 (PYPL…SAME). Phosphoserine; by ATM and ATR is present on residues Ser59 and Ser75. Residues 92-103 (LTEEVQPSEENM) are compositionally biased toward acidic residues. The span at 108 to 121 (PGTSEEPSQGSGAN) shows a compositional bias: polar residues. Residues 223–242 (SDSDGSAEDEEVVVQAEEPE) show a composition bias toward acidic residues. The RING-type; degenerate zinc finger occupies 288 to 332 (CTICLEQWTNAGDHRISALRCGHLFGFRCISKWLKGQTRKCPQCN). A coiled-coil region spans residues 358–403 (RMKSDLLNEQMLRKQAELESAQCRLQLQVLIDKCTKLNSRVQDLEK). 3 WD repeats span residues 493–535 (IPMH…VVQT), 536–568 (YNTGRPVWSCCWCLDENNYVYAGLASGSILIYD), and 583–628 (KARC…SHKP).

Interacts with MDM2 and p53/TP53. Binds to the RPA complex via direct interaction with RPA2. Interacts with RAD51. Phosphorylated at Ser-59 and Ser-75 upon DNA damage by ATM or ATR. ATM phosphorylation occurs at early times upon DNA damage, while ATR is the major kinase at later times. Phosphorylation by ATM and ATR is required to stabilize p53/TP53. Part of the phosphorylation depends upon RPA2 presence.

Its subcellular location is the nucleus. It is found in the PML body. The protein resides in the cytoplasm. The enzyme catalyses S-ubiquitinyl-[E2 ubiquitin-conjugating enzyme]-L-cysteine + [acceptor protein]-L-lysine = [E2 ubiquitin-conjugating enzyme]-L-cysteine + N(6)-ubiquitinyl-[acceptor protein]-L-lysine.. It functions in the pathway protein modification; protein ubiquitination. Its function is as follows. E3 ubiquitin-protein ligase required for the repair of DNA interstrand cross-links (ICL) in response to DNA damage. Plays a key role in RPA-mediated DNA damage signaling and repair. Acts by mediating ubiquitination of the RPA complex (RPA1, RPA2 and RPA3 subunits) and RAD51 at stalled replication forks, leading to remove them from DNA damage sites and promote homologous recombination. Also mediates the ubiquitination of p53/TP53 in the late response to DNA damage, and acts as a positive regulator of p53/TP53 stability, thereby regulating the G1/S DNA damage checkpoint. May act by catalyzing the formation of short polyubiquitin chains on p53/TP53 that are not targeted to the proteasome. In response to ionizing radiation, interacts with MDM2 and enhances p53/TP53 ubiquitination, possibly by restricting MDM2 from extending polyubiquitin chains on ubiquitinated p53/TP53. Required to translesion DNA synthesis across DNA-protein cross-link adducts by catalyzing ubiquitination of proteins on single-stranded DNA (ssDNA). The protein is E3 ubiquitin-protein ligase RFWD3 (Rfwd3) of Mus musculus (Mouse).